A 312-amino-acid chain; its full sequence is tRNA dimethylallyltransferase (312 aa).

Residue 11–18 (GLTATGKT) participates in ATP binding. 13–18 (TATGKT) contributes to the substrate binding site. Residues 36–39 (DSMC) are interaction with substrate tRNA.

This sequence belongs to the IPP transferase family. In terms of assembly, monomer. Mg(2+) is required as a cofactor.

It carries out the reaction adenosine(37) in tRNA + dimethylallyl diphosphate = N(6)-dimethylallyladenosine(37) in tRNA + diphosphate. Functionally, catalyzes the transfer of a dimethylallyl group onto the adenine at position 37 in tRNAs that read codons beginning with uridine, leading to the formation of N6-(dimethylallyl)adenosine (i(6)A). The chain is tRNA dimethylallyltransferase from Caldicellulosiruptor saccharolyticus (strain ATCC 43494 / DSM 8903 / Tp8T 6331).